The sequence spans 436 residues: Gustatory receptor for sugar taste 61a (436 aa).

Topologically, residues 1–78 (MSRTSDDIRK…PQDVKFKVRS (78 aa)) are cytoplasmic. Residues 79–99 (IGLAVTGLFLLLGGMKTLVGA) form a helical membrane-spanning segment. Residues 100-111 (NILFTEGLNAKN) are Extracellular-facing. Residues 112–132 (IVGLVFLIVGMVNWLNFVGFA) traverse the membrane as a helical segment. Residues 133–164 (RSWSHIMLPWSSVDILMLFPPYKRGKRSLRSK) lie on the Cytoplasmic side of the membrane. The helical transmembrane segment at 165 to 185 (VNVLALSVVVLAVGDHMLYYA) threads the bilayer. The Extracellular portion of the chain corresponds to 186–214 (SGYCSYSMHILQCHTNHSRITFGLYLEKE). The N-linked (GlcNAc...) asparagine glycan is linked to Asn201. The helical transmembrane segment at 215–235 (FSDIMFIMPFNIFSMCYGFWL) threads the bilayer. Residues 236–237 (NG) are Cytoplasmic-facing. The helical transmembrane segment at 238 to 258 (AFTFLWNFMDIFIVMTSIGLA) threads the bilayer. The Extracellular segment spans residues 259–304 (QRFQQFAARVGALEGRHVPEALWYDIRRDHIRLCELASLVEASMSN). A helical membrane pass occupies residues 305-325 (IVFVSCANNVYVICNQALAIF). Topologically, residues 326-334 (TKLRHPINY) are cytoplasmic. Residues 335 to 355 (VYFWYSLIFLLARTSLVFMTA) form a helical membrane-spanning segment. The Extracellular portion of the chain corresponds to 356 to 436 (SKIHDASLLP…AKSHKGLRCA (81 aa)).

The protein belongs to the insect chemoreceptor superfamily. Gustatory receptor (GR) family. Gr5a subfamily. Expressed in sweet sensing neurons of classical chemosensory sensilla, but also in two supersensitive neurons of atypical taste sensilla.

The protein localises to the cell membrane. Its function is as follows. One of the few identified sugar gustatory receptors identified so far with glucose being its primary ligand and which mediates acceptance behavior. This chain is Gustatory receptor for sugar taste 61a (Gr61a), found in Drosophila melanogaster (Fruit fly).